We begin with the raw amino-acid sequence, 314 residues long: tRNA dimethylallyltransferase 1 (314 aa).

Position 8–15 (8–15 (GPTGTGKS)) interacts with ATP. Substrate is bound at residue 10 to 15 (TGTGKS).

This sequence belongs to the IPP transferase family. As to quaternary structure, monomer. It depends on Mg(2+) as a cofactor.

The enzyme catalyses adenosine(37) in tRNA + dimethylallyl diphosphate = N(6)-dimethylallyladenosine(37) in tRNA + diphosphate. Functionally, catalyzes the transfer of a dimethylallyl group onto the adenine at position 37 in tRNAs that read codons beginning with uridine, leading to the formation of N6-(dimethylallyl)adenosine (i(6)A). This Mycobacterium marinum (strain ATCC BAA-535 / M) protein is tRNA dimethylallyltransferase 1.